Consider the following 416-residue polypeptide: Multifunctional CCA protein (416 aa).

Residues G8 and R11 each coordinate ATP. Residues G8 and R11 each contribute to the CTP site. Mg(2+) contacts are provided by D21 and D23. 3 residues coordinate ATP: R91, R137, and R140. Residues R91, R137, and R140 each coordinate CTP. The HD domain maps to 226–327; the sequence is TGVHIMLVID…VNLLERCDAF (102 aa).

The protein belongs to the tRNA nucleotidyltransferase/poly(A) polymerase family. Bacterial CCA-adding enzyme type 1 subfamily. Monomer. Can also form homodimers and oligomers. Requires Mg(2+) as cofactor. Ni(2+) serves as cofactor.

It carries out the reaction a tRNA precursor + 2 CTP + ATP = a tRNA with a 3' CCA end + 3 diphosphate. The enzyme catalyses a tRNA with a 3' CCA end + 2 CTP + ATP = a tRNA with a 3' CCACCA end + 3 diphosphate. Catalyzes the addition and repair of the essential 3'-terminal CCA sequence in tRNAs without using a nucleic acid template. Adds these three nucleotides in the order of C, C, and A to the tRNA nucleotide-73, using CTP and ATP as substrates and producing inorganic pyrophosphate. tRNA 3'-terminal CCA addition is required both for tRNA processing and repair. Also involved in tRNA surveillance by mediating tandem CCA addition to generate a CCACCA at the 3' terminus of unstable tRNAs. While stable tRNAs receive only 3'-terminal CCA, unstable tRNAs are marked with CCACCA and rapidly degraded. This Janthinobacterium sp. (strain Marseille) (Minibacterium massiliensis) protein is Multifunctional CCA protein.